The chain runs to 553 residues: Putative transport protein YidE (553 aa).

5 consecutive transmembrane segments (helical) span residues 4–24 (IALTVSILALVAVVGLFIGNV), 28–48 (GIGLGIGGVLFGGIIVGHFVS), 65–85 (FGLILFVYTIGIQVGPGFFAS), 95–115 (LFAVLIVIIGGLVTAILHKLF), and 158–178 (MSYAMAYPFGICGILFTMWML). 2 consecutive RCK C-terminal domains span residues 191–276 (QQHE…VIGQ) and 279–361 (DTSL…VLGN). The next 6 helical transmembrane spans lie at 371 to 391 (MLPVFIGIGLGVLLGSIPVFV), 393 to 413 (GFPAALKLGLAGGPLIMALIL), 439 to 459 (IVLFLSVVGLKSGGDFVNTLV), 464 to 484 (LSWIGYGALITAVPLITVGIL), 493 to 513 (YLTMCGMLAGSMTDPPALAFA), and 533 to 553 (LVMFLRIITPQLLAVLFWSIG).

The protein belongs to the AAE transporter (TC 2.A.81) family. YidE subfamily.

Its subcellular location is the cell membrane. This is Putative transport protein YidE from Escherichia coli O7:K1 (strain IAI39 / ExPEC).